Consider the following 361-residue polypeptide: Phospho-N-acetylmuramoyl-pentapeptide-transferase (361 aa).

Transmembrane regions (helical) follow at residues Gly27 to Leu47, Thr72 to Ala92, Leu94 to Phe114, Ala133 to Gly153, Leu169 to Gly189, Gly200 to Ser220, Val237 to Phe257, Ile264 to Ala284, Ile289 to Val309, and Gln338 to Leu358.

This sequence belongs to the glycosyltransferase 4 family. MraY subfamily. It depends on Mg(2+) as a cofactor.

Its subcellular location is the cell inner membrane. The catalysed reaction is UDP-N-acetyl-alpha-D-muramoyl-L-alanyl-gamma-D-glutamyl-meso-2,6-diaminopimeloyl-D-alanyl-D-alanine + di-trans,octa-cis-undecaprenyl phosphate = di-trans,octa-cis-undecaprenyl diphospho-N-acetyl-alpha-D-muramoyl-L-alanyl-D-glutamyl-meso-2,6-diaminopimeloyl-D-alanyl-D-alanine + UMP. Its pathway is cell wall biogenesis; peptidoglycan biosynthesis. Catalyzes the initial step of the lipid cycle reactions in the biosynthesis of the cell wall peptidoglycan: transfers peptidoglycan precursor phospho-MurNAc-pentapeptide from UDP-MurNAc-pentapeptide onto the lipid carrier undecaprenyl phosphate, yielding undecaprenyl-pyrophosphoryl-MurNAc-pentapeptide, known as lipid I. This is Phospho-N-acetylmuramoyl-pentapeptide-transferase from Azorhizobium caulinodans (strain ATCC 43989 / DSM 5975 / JCM 20966 / LMG 6465 / NBRC 14845 / NCIMB 13405 / ORS 571).